We begin with the raw amino-acid sequence, 537 residues long: T-complex protein 1 subunit theta (537 aa).

The protein belongs to the TCP-1 chaperonin family. Heterooligomeric complex.

The protein localises to the cytoplasm. In terms of biological role, molecular chaperone; assists the folding of proteins upon ATP hydrolysis. Known to play a role, in vitro, in the folding of actin and tubulin. This chain is T-complex protein 1 subunit theta (cct8), found in Dictyostelium discoideum (Social amoeba).